A 141-amino-acid polypeptide reads, in one-letter code: D-aminoacyl-tRNA deacylase (141 aa).

The Gly-cisPro motif, important for rejection of L-amino acids signature appears at 133-134 (GP).

Belongs to the DTD family. In terms of assembly, homodimer.

The protein resides in the cytoplasm. It carries out the reaction glycyl-tRNA(Ala) + H2O = tRNA(Ala) + glycine + H(+). The enzyme catalyses a D-aminoacyl-tRNA + H2O = a tRNA + a D-alpha-amino acid + H(+). Functionally, an aminoacyl-tRNA editing enzyme that deacylates mischarged D-aminoacyl-tRNAs. Also deacylates mischarged glycyl-tRNA(Ala), protecting cells against glycine mischarging by AlaRS. Acts via tRNA-based rather than protein-based catalysis; rejects L-amino acids rather than detecting D-amino acids in the active site. By recycling D-aminoacyl-tRNA to D-amino acids and free tRNA molecules, this enzyme counteracts the toxicity associated with the formation of D-aminoacyl-tRNA entities in vivo and helps enforce protein L-homochirality. The sequence is that of D-aminoacyl-tRNA deacylase from Thermobifida fusca (strain YX).